The following is a 441-amino-acid chain: N-acetyl-S-(2-succino)cysteine monooxygenase (441 aa).

Positions 59, 96, 146, 150, 220, and 221 each coordinate FMN.

The protein belongs to the NtaA/SnaA/DszA monooxygenase family. In terms of assembly, homodimer. FMN is required as a cofactor.

It carries out the reaction N-acetyl-S-(2-succino)-L-cysteine + NADH + O2 + H(+) = N-acetyl-L-cysteine + oxaloacetate + NAD(+) + H2O. The protein operates within amino-acid biosynthesis; L-cysteine biosynthesis. Catalyzes the oxidative cleavage of the C-S bond of N-acetyl-S-(2-succino)cysteine, forming oxaloacetate and N-acetylcysteine (NAC). Is involved in a S-(2-succino)cysteine (2SC) degradation pathway that allows B.subtilis to grow on 2SC as a sole sulfur source, via its metabolization to cysteine. Shows almost no activity on S-succinylglutathione and 2SC. The protein is N-acetyl-S-(2-succino)cysteine monooxygenase of Bacillus subtilis (strain 168).